The sequence spans 281 residues: Undecaprenyl-diphosphatase (281 aa).

8 helical membrane-spanning segments follow: residues 4 to 24, 45 to 65, 89 to 109, 113 to 133, 152 to 172, 190 to 210, 225 to 245, and 257 to 277; these read IEIL…WLPI, AFMS…VMVI, WLKV…DDWF, FHNM…FIYL, LPYT…LPGT, SVVT…ASAL, GQLF…MVAI, and FTLF…YSFV.

It belongs to the UppP family.

The protein resides in the cell membrane. It catalyses the reaction di-trans,octa-cis-undecaprenyl diphosphate + H2O = di-trans,octa-cis-undecaprenyl phosphate + phosphate + H(+). Catalyzes the dephosphorylation of undecaprenyl diphosphate (UPP). Confers resistance to bacitracin. The chain is Undecaprenyl-diphosphatase from Streptococcus pneumoniae (strain Hungary19A-6).